The primary structure comprises 888 residues: Autophagy-related protein 9 (888 aa).

The segment at methionine 1–proline 170 is disordered. The Cytoplasmic portion of the chain corresponds to methionine 1–asparagine 255. The segment covering serine 13 to arginine 24 has biased composition (polar residues). The segment covering aspartate 28–glutamate 38 has biased composition (acidic residues). Residues arginine 123–threonine 143 are compositionally biased toward polar residues. A helical transmembrane segment spans residues phenylalanine 256–isoleucine 276. Residues arginine 277 to arginine 422 lie on the Lumenal side of the membrane. A helical transmembrane segment spans residues phenylalanine 423–isoleucine 443. The Cytoplasmic portion of the chain corresponds to valine 444–arginine 511. Residues threonine 512 to serine 532 lie within the membrane without spanning it. The Cytoplasmic portion of the chain corresponds to glutamate 533–arginine 544. Residues proline 545–serine 565 traverse the membrane as a helical segment. The Lumenal portion of the chain corresponds to glutamate 566–lysine 611. A helical transmembrane segment spans residues valine 612–serine 632. Topologically, residues leucine 633–aspartate 642 are cytoplasmic. The stretch at phenylalanine 643–phenylalanine 663 is an intramembrane region. Topologically, residues aspartate 664–valine 888 are cytoplasmic. 2 disordered regions span residues glycine 748–glycine 770 and glutamate 834–alanine 866.

The protein belongs to the ATG9 family. As to quaternary structure, homotrimer; forms a homotrimer with a central pore that forms a path between the two membrane leaflets. In terms of processing, phosphorylated by ATG1. ATG1 phosphorylation is required for ATG18 interaction and preautophagosome elongation.

Its subcellular location is the preautophagosomal structure membrane. It is found in the cytoplasmic vesicle membrane. It localises to the golgi apparatus membrane. The protein localises to the endoplasmic reticulum membrane. The enzyme catalyses a 1,2-diacyl-sn-glycero-3-phosphocholine(in) = a 1,2-diacyl-sn-glycero-3-phosphocholine(out). It carries out the reaction a 1,2-diacyl-sn-glycero-3-phospho-L-serine(in) = a 1,2-diacyl-sn-glycero-3-phospho-L-serine(out). It catalyses the reaction a 1,2-diacyl-sn-glycero-3-phosphoethanolamine(in) = a 1,2-diacyl-sn-glycero-3-phosphoethanolamine(out). The catalysed reaction is a 1,2-diacyl-sn-glycero-3-phospho-(1D-myo-inositol-3-phosphate)(in) = a 1,2-diacyl-sn-glycero-3-phospho-(1D-myo-inositol-3-phosphate)(out). Phospholipid scramblase involved in autophagy and cytoplasm to vacuole transport (Cvt) vesicle formation. Cycles between the preautophagosomal structure/phagophore assembly site (PAS) and the cytoplasmic vesicle pool and supplies membrane for the growing autophagosome. Lipid scramblase activity plays a key role in preautophagosomal structure/phagophore assembly by distributing the phospholipids that arrive through ATG2 from the cytoplasmic to the luminal leaflet of the bilayer, thereby driving autophagosomal membrane expansion. Required for mitophagy. Also involved in endoplasmic reticulum-specific autophagic process and is essential for the survival of cells subjected to severe ER stress. Different machineries are required for anterograde trafficking to the PAS during either the Cvt pathway or bulk autophagy and for retrograde trafficking. Autophagy is required for proper vegetative growth, asexual/sexual reproduction, and full virulence. Autophagy is particularly involved in the biosynthesis of deoxynivalenol (DON), an important virulence determinant. Required for aerial hyphae development and lipid droplet degradation in response to starvation. This is Autophagy-related protein 9 from Gibberella zeae (strain ATCC MYA-4620 / CBS 123657 / FGSC 9075 / NRRL 31084 / PH-1) (Wheat head blight fungus).